We begin with the raw amino-acid sequence, 279 residues long: L-ascorbate peroxidase 5, peroxisomal (279 aa).

The Proton acceptor role is filled by H39. Residues 111-134 are disordered; sequence PFTPGRKDADSADDGELPNPNEGA. A heme b-binding site is contributed by H158. K(+) contacts are provided by T159, T175, and D182. The helical transmembrane segment at 251–271 threads the bilayer; it reads AVTQQTLGIAVAAAVVIFTIC. The AKR2A-binding sequence (ABS) required for peroxisome membrane targeting signature appears at 272–279; sequence YEASRRGK.

Belongs to the peroxidase family. Ascorbate peroxidase subfamily. In terms of assembly, interacts with AKR2A and AKR2B. Requires heme b as cofactor.

The protein resides in the peroxisome membrane. The enzyme catalyses L-ascorbate + H2O2 = L-dehydroascorbate + 2 H2O. Plays a key role in hydrogen peroxide removal. The polypeptide is L-ascorbate peroxidase 5, peroxisomal (APX5) (Arabidopsis thaliana (Mouse-ear cress)).